Consider the following 188-residue polypeptide: Anaphase-promoting complex subunit 10 (188 aa).

Positions 4–187 constitute a DOC domain; the sequence is NSNINSNSRL…SPEVSMFQTL (184 aa).

The protein belongs to the APC10 family. In terms of assembly, the APC/C is composed of at least 13 subunits that stay tightly associated throughout the cell cycle: anapc1, anapc2, anapc3, anapc4, anapc5, anapc6, anapc7, anapc8, anapc10, anapc11, cdc20, cdc26 and cdh1.

The protein resides in the nucleus. The protein operates within protein modification; protein ubiquitination. Functionally, component of the anaphase promoting complex/cyclosome (APC/C), a cell cycle-regulated E3 ubiquitin-protein ligase complex that controls progression through mitosis and the G1 phase of the cell cycle. This Dictyostelium discoideum (Social amoeba) protein is Anaphase-promoting complex subunit 10 (anapc10).